A 460-amino-acid chain; its full sequence is Sexual development regulator velC (460 aa).

3 disordered regions span residues 67–131 (VGPD…PQAP), 152–216 (YAPR…RPDP), and 422–460 (KKGNDRSKNTRSHDDSSDGEQDEGEATLQGKRRRRSARQ). The segment covering 192–207 (PVTTNGRPPDSNSPMV) has biased composition (polar residues). The region spanning 239-422 (LSDNRFNLQI…KEQGCIISIK (184 aa)) is the Velvet domain. Positions 423-437 (KGNDRSKNTRSHDDS) are enriched in basic and acidic residues. Basic residues predominate over residues 451-460 (GKRRRRSARQ).

Belongs to the velvet family. VelC subfamily. In terms of assembly, interacts with VE1.

Its subcellular location is the nucleus. In terms of biological role, velvet-domain-containing protein that acts as a positive regulator of sexual development. Dispensable for regulation of conidial size, hyphal hydrophobicity, fumonisin production, and oxidant resistance. This is Sexual development regulator velC from Gibberella moniliformis (strain M3125 / FGSC 7600) (Maize ear and stalk rot fungus).